Reading from the N-terminus, the 585-residue chain is Pre-mRNA-splicing factor sap145 (585 aa).

Residues 1–74 (MAEIQTAQNP…NNDNLYNDKK (74 aa)) adopt a coiled-coil conformation. Residues 1–84 (MAEIQTAQNP…SNGNFYDTNK (84 aa)) are disordered. The span at 12 to 22 (KELEKILERNN) shows a compositional bias: basic and acidic residues. Positions 23–41 (KQKNKKSRNQVRREKKKLL) are enriched in basic residues. A compositionally biased stretch (basic and acidic residues) spans 51-62 (LAEKNSDDKDQL). Phosphoserine is present on S145. Residues 400 to 460 (IHAGTGSPVS…SASEPRSQRE (61 aa)) form a disordered region. Acidic residues predominate over residues 416-439 (LEEFEEEESSEEEESEDVEYPTEE).

As to quaternary structure, belongs to the 40S cdc5-associated complex (or cwf complex), a spliceosome sub-complex reminiscent of a late-stage spliceosome composed of the U2, U5 and U6 snRNAs and at least brr2, cdc5, cwf2/prp3, cwf3/syf1, cwf4/syf3, cwf5/ecm2, spp42/cwf6, cwf7/spf27, cwf8, cwf9, cwf10, cwf11, cwf12, prp45/cwf13, cwf14, cwf15, cwf16, cwf17, cwf18, cwf19, cwf20, cwf21, cwf22, cwf23, cwf24, cwf25, cwf26, cyp7/cwf27, cwf28, cwf29/ist3, lea1, msl1, prp5/cwf1, prp10/sap155, prp12/sap130, prp17, prp22, sap61, sap62, sap114, sap145, slu7, smb1, smd1, smd3, smf1, smg1 and syf2. Sap145 is part of the SF3b subcomplex of the Prp19-associated nineteen complex (NTC), composed of ini1, prp10, prp12/sap130, sap10/sap155, sap14, sap49 and sap145. Part of the U2 snRNP.

The protein localises to the nucleus. Its subcellular location is the cytoplasm. Involved in pre-mRNA splicing. May be involved in endoplasmic reticulum-associated protein degradation (ERAD) and required for growth at low and high temperatures. This is Pre-mRNA-splicing factor sap145 (sap145) from Schizosaccharomyces pombe (strain 972 / ATCC 24843) (Fission yeast).